The following is a 460-amino-acid chain: Bifunctional protein GlmU (460 aa).

Residues 1-229 form a pyrophosphorylase region; the sequence is MSNYAIILAA…FEESLGVNDR (229 aa). Residues 8-11, K22, Q72, and 77-78 each bind UDP-N-acetyl-alpha-D-glucosamine; these read LAAG and GT. Position 102 (D102) interacts with Mg(2+). UDP-N-acetyl-alpha-D-glucosamine-binding residues include G139, E154, N169, and N227. N227 contacts Mg(2+). The segment at 230 to 250 is linker; it reads VALATAEDVMRRRINKTHMIN. The interval 251-460 is N-acetyltransferase; that stretch reads GVTFQNPNAT…KKPHHPSQQK (210 aa). 2 residues coordinate UDP-N-acetyl-alpha-D-glucosamine: R332 and K350. The Proton acceptor role is filled by H362. 2 residues coordinate UDP-N-acetyl-alpha-D-glucosamine: Y365 and N376. Acetyl-CoA is bound by residues A379, 385 to 386, S404, A422, and R439; that span reads NY.

In the N-terminal section; belongs to the N-acetylglucosamine-1-phosphate uridyltransferase family. It in the C-terminal section; belongs to the transferase hexapeptide repeat family. In terms of assembly, homotrimer. Mg(2+) is required as a cofactor.

It is found in the cytoplasm. It carries out the reaction alpha-D-glucosamine 1-phosphate + acetyl-CoA = N-acetyl-alpha-D-glucosamine 1-phosphate + CoA + H(+). It catalyses the reaction N-acetyl-alpha-D-glucosamine 1-phosphate + UTP + H(+) = UDP-N-acetyl-alpha-D-glucosamine + diphosphate. Its pathway is nucleotide-sugar biosynthesis; UDP-N-acetyl-alpha-D-glucosamine biosynthesis; N-acetyl-alpha-D-glucosamine 1-phosphate from alpha-D-glucosamine 6-phosphate (route II): step 2/2. It participates in nucleotide-sugar biosynthesis; UDP-N-acetyl-alpha-D-glucosamine biosynthesis; UDP-N-acetyl-alpha-D-glucosamine from N-acetyl-alpha-D-glucosamine 1-phosphate: step 1/1. The protein operates within bacterial outer membrane biogenesis; LPS lipid A biosynthesis. Its function is as follows. Catalyzes the last two sequential reactions in the de novo biosynthetic pathway for UDP-N-acetylglucosamine (UDP-GlcNAc). The C-terminal domain catalyzes the transfer of acetyl group from acetyl coenzyme A to glucosamine-1-phosphate (GlcN-1-P) to produce N-acetylglucosamine-1-phosphate (GlcNAc-1-P), which is converted into UDP-GlcNAc by the transfer of uridine 5-monophosphate (from uridine 5-triphosphate), a reaction catalyzed by the N-terminal domain. The chain is Bifunctional protein GlmU from Streptococcus thermophilus (strain ATCC BAA-491 / LMD-9).